Reading from the N-terminus, the 183-residue chain is MTVGLIGVVEKISALEVHIEVQGVVYGVQVSMRTASMLQTGQKARLKILQVIKEDAHLLYGFLEESEKILFERLLKINGVGGRIALAILSSFSPNEFENIIATKEVKRLQQVPGIGKKLADKIMVDLIGFFIQDETKPVHNEAFLALESLGFKSAEINPILKKLKPNLSVEEAIKEALQQLRS.

Residues 1–63 (MTVGLIGVVE…EDAHLLYGFL (63 aa)) form a domain I region. The domain II stretch occupies residues 64–141 (EESEKILFER…IQDETKPVHN (78 aa)). A region of interest (flexible linker) is located at residue Asn-141. Residues 141–183 (NEAFLALESLGFKSAEINPILKKLKPNLSVEEAIKEALQQLRS) form a domain III region.

The protein belongs to the RuvA family. As to quaternary structure, homotetramer. Forms an RuvA(8)-RuvB(12)-Holliday junction (HJ) complex. HJ DNA is sandwiched between 2 RuvA tetramers; dsDNA enters through RuvA and exits via RuvB. An RuvB hexamer assembles on each DNA strand where it exits the tetramer. Each RuvB hexamer is contacted by two RuvA subunits (via domain III) on 2 adjacent RuvB subunits; this complex drives branch migration. In the full resolvosome a probable DNA-RuvA(4)-RuvB(12)-RuvC(2) complex forms which resolves the HJ.

Its subcellular location is the cytoplasm. Its function is as follows. The RuvA-RuvB-RuvC complex processes Holliday junction (HJ) DNA during genetic recombination and DNA repair, while the RuvA-RuvB complex plays an important role in the rescue of blocked DNA replication forks via replication fork reversal (RFR). RuvA specifically binds to HJ cruciform DNA, conferring on it an open structure. The RuvB hexamer acts as an ATP-dependent pump, pulling dsDNA into and through the RuvAB complex. HJ branch migration allows RuvC to scan DNA until it finds its consensus sequence, where it cleaves and resolves the cruciform DNA. This Helicobacter acinonychis (strain Sheeba) protein is Holliday junction branch migration complex subunit RuvA.